The chain runs to 150 residues: Geranyl diphosphate phosphohydrolase (150 aa).

The Nudix hydrolase domain occupies Ser-14–Pro-147. A Nudix box motif is present at residues Gly-48–Asp-69. Positions 63 and 67 each coordinate Mg(2+).

It belongs to the Nudix hydrolase family. In terms of tissue distribution, expressed in petals. Little or no expression in stamens, sepals or young leaves.

The protein resides in the cytoplasm. The enzyme catalyses (2E)-geranyl diphosphate + H2O = (2E)-geranyl phosphate + phosphate + H(+). Involved in a cytosolic pathway for the biosynthesis of free monoterpene alcohols that contribute to fragrance. Lacks terpene synthase activity, but has a diphosphohydrolase activity with geranyl diphosphate and farnesyl diphosphate as substrates. No activity with 8-oxo-dGTP and dGTP and unable to dephosphorylate geranyl phosphate to geraniol. In Rosa hybrid cultivar, this protein is Geranyl diphosphate phosphohydrolase.